A 660-amino-acid polypeptide reads, in one-letter code: Pseudouridylate synthase 7 homolog (660 aa).

The segment at 1–99 (MEMTSTSLKR…EAGEEEEAES (99 aa)) is disordered. Phosphoserine is present on S7. A compositionally biased stretch (basic and acidic residues) spans 22 to 32 (TPHDETKKQKV). A compositionally biased stretch (acidic residues) spans 76 to 99 (QEEEEEEEEEDGLSEAGEEEEAES). S126 carries the post-translational modification Phosphoserine. Catalysis depends on D293, which acts as the Nucleophile. The 211-residue stretch at 369 to 579 (GFINYYGMQR…SGAYRRIIIR (211 aa)) folds into the TRUD domain.

This sequence belongs to the pseudouridine synthase TruD family. Interacts with SIRT1.

Its subcellular location is the nucleus. The enzyme catalyses a uridine in tRNA = a pseudouridine in tRNA. The catalysed reaction is uridine(13) in tRNA = pseudouridine(13) in tRNA. It carries out the reaction a uridine in mRNA = a pseudouridine in mRNA. In terms of biological role, pseudouridylate synthase that catalyzes pseudouridylation of RNAs. Acts as a regulator of protein synthesis in embryonic stem cells by mediating pseudouridylation of RNA fragments derived from tRNAs (tRFs): pseudouridylated tRFs inhibit translation by targeting the translation initiation complex. Also catalyzes pseudouridylation of mRNAs: mediates pseudouridylation of mRNAs with the consensus sequence 5'-UGUAG-3'. Acts as a regulator of pre-mRNA splicing by mediating pseudouridylation of pre-mRNAs at locations associated with alternatively spliced regions. Pseudouridylation of pre-mRNAs near splice sites directly regulates mRNA splicing and mRNA 3'-end processing. In addition to mRNAs and tRNAs, binds other types of RNAs, such as snRNAs, Y RNAs and vault RNAs, suggesting that it can catalyze pseudouridylation of many RNA types. The protein is Pseudouridylate synthase 7 homolog of Mus musculus (Mouse).